The primary structure comprises 156 residues: Small ribosomal subunit protein uS7 (156 aa).

It belongs to the universal ribosomal protein uS7 family. In terms of assembly, part of the 30S ribosomal subunit. Contacts proteins S9 and S11.

In terms of biological role, one of the primary rRNA binding proteins, it binds directly to 16S rRNA where it nucleates assembly of the head domain of the 30S subunit. Is located at the subunit interface close to the decoding center, probably blocks exit of the E-site tRNA. This Buchnera aphidicola subsp. Baizongia pistaciae (strain Bp) protein is Small ribosomal subunit protein uS7.